We begin with the raw amino-acid sequence, 698 residues long: Polyribonucleotide nucleotidyltransferase (698 aa).

The Mg(2+) site is built by D490 and D496. A KH domain is found at 557–616; sequence PKVVTMTIKPDKIRDVIGPGGKKINEIIDETGVKLDIEQDGTIFIGAVDQAMINRAREII. An S1 motif domain is found at 626–694; the sequence is GQTYQATVKR…KQGRVNASHR (69 aa).

The protein belongs to the polyribonucleotide nucleotidyltransferase family. Mg(2+) serves as cofactor.

Its subcellular location is the cytoplasm. The enzyme catalyses RNA(n+1) + phosphate = RNA(n) + a ribonucleoside 5'-diphosphate. Its function is as follows. Involved in mRNA degradation. Catalyzes the phosphorolysis of single-stranded polyribonucleotides processively in the 3'- to 5'-direction. This is Polyribonucleotide nucleotidyltransferase from Staphylococcus aureus (strain MSSA476).